The sequence spans 79 residues: Small ribosomal subunit protein bS18 (79 aa).

This sequence belongs to the bacterial ribosomal protein bS18 family. Part of the 30S ribosomal subunit. Forms a tight heterodimer with protein bS6.

Binds as a heterodimer with protein bS6 to the central domain of the 16S rRNA, where it helps stabilize the platform of the 30S subunit. The chain is Small ribosomal subunit protein bS18 from Aster yellows witches'-broom phytoplasma (strain AYWB).